Reading from the N-terminus, the 166-residue chain is Large ribosomal subunit protein uL10 (166 aa).

This sequence belongs to the universal ribosomal protein uL10 family. In terms of assembly, part of the ribosomal stalk of the 50S ribosomal subunit. The N-terminus interacts with L11 and the large rRNA to form the base of the stalk. The C-terminus forms an elongated spine to which L12 dimers bind in a sequential fashion forming a multimeric L10(L12)X complex.

In terms of biological role, forms part of the ribosomal stalk, playing a central role in the interaction of the ribosome with GTP-bound translation factors. The chain is Large ribosomal subunit protein uL10 from Oceanobacillus iheyensis (strain DSM 14371 / CIP 107618 / JCM 11309 / KCTC 3954 / HTE831).